We begin with the raw amino-acid sequence, 175 residues long: Protein FLOWERING LOCUS T (175 aa).

The protein belongs to the phosphatidylethanolamine-binding protein family. In terms of assembly, interacts with FD/BZIP14 and FDP/BZIP27. Interacts with FTIP1/MCTP1 in phloem companion cells. Interacts with NAKR1. Mostly localized in leaves vasculature.

The protein localises to the cytoplasm. It localises to the nucleus. The protein resides in the endoplasmic reticulum. Functionally, component of the mobile flower-promoting signal (floral stimulus or florigen). Promotes the transition from vegetative growth to flowering. Required for 'SEPALLATA3' (SEP3) and 'FRUITFULL' (FUL) accumulation in mature rosette leaves. Seems to acts in parallel with 'LEAFY' to induce flowering by regulating 'APETALA1'. Translated in leaves and then transported to the shoot apical meristem where it activates the transcription of several floral meristem identity genes. May play a role in both the autonomous and the long-day flowering pathways. In Arabidopsis thaliana (Mouse-ear cress), this protein is Protein FLOWERING LOCUS T.